The sequence spans 325 residues: MSDTPQAILLMGPTASGKTGLALELARRFPVEIVSVDSALVYRDMDIGTAKPTAEEMAACPHHLIDVISPLQSYSAAQFHADANRLIADIQARGKLPLLVGGTMLYYKALLEGLSDLPQADAALRAELDADAALLGWPAMHARLAELDPATASRLNPNDSQRIHRALEVCLLSGKPMSELIAQGKEAAAGFRFLPLALVPRERGWLHARIAERFRIMLEQGFLDEVSRLRAKYPELTLNLPSMRCVGYRQAWEHQDGLYGHDEFVERGVAATRQLAKRQLTWTRSLDAIPVDAQRDGLAGLLGDAVDDFLAGRPPAESLRYAGDF.

12 to 19 (GPTASGKT) contacts ATP. 14–19 (TASGKT) is a substrate binding site. 3 interaction with substrate tRNA regions span residues 37–40 (DSAL), 161–165 (QRIHR), and 244–249 (RCVGYR).

It belongs to the IPP transferase family. In terms of assembly, monomer. It depends on Mg(2+) as a cofactor.

The enzyme catalyses adenosine(37) in tRNA + dimethylallyl diphosphate = N(6)-dimethylallyladenosine(37) in tRNA + diphosphate. Catalyzes the transfer of a dimethylallyl group onto the adenine at position 37 in tRNAs that read codons beginning with uridine, leading to the formation of N6-(dimethylallyl)adenosine (i(6)A). The protein is tRNA dimethylallyltransferase of Chromobacterium violaceum (strain ATCC 12472 / DSM 30191 / JCM 1249 / CCUG 213 / NBRC 12614 / NCIMB 9131 / NCTC 9757 / MK).